A 344-amino-acid chain; its full sequence is N-acetyl-gamma-glutamyl-phosphate reductase (344 aa).

Residue cysteine 150 is part of the active site.

Belongs to the NAGSA dehydrogenase family. Type 1 subfamily.

The protein localises to the cytoplasm. It catalyses the reaction N-acetyl-L-glutamate 5-semialdehyde + phosphate + NADP(+) = N-acetyl-L-glutamyl 5-phosphate + NADPH + H(+). Its pathway is amino-acid biosynthesis; L-arginine biosynthesis; N(2)-acetyl-L-ornithine from L-glutamate: step 3/4. In terms of biological role, catalyzes the NADPH-dependent reduction of N-acetyl-5-glutamyl phosphate to yield N-acetyl-L-glutamate 5-semialdehyde. The chain is N-acetyl-gamma-glutamyl-phosphate reductase from Azotobacter vinelandii (strain DJ / ATCC BAA-1303).